The chain runs to 212 residues: Uridine kinase (212 aa).

13 to 20 (GASASGKS) contributes to the ATP binding site.

This sequence belongs to the uridine kinase family.

Its subcellular location is the cytoplasm. It carries out the reaction uridine + ATP = UMP + ADP + H(+). The catalysed reaction is cytidine + ATP = CMP + ADP + H(+). It participates in pyrimidine metabolism; CTP biosynthesis via salvage pathway; CTP from cytidine: step 1/3. The protein operates within pyrimidine metabolism; UMP biosynthesis via salvage pathway; UMP from uridine: step 1/1. This Shewanella piezotolerans (strain WP3 / JCM 13877) protein is Uridine kinase.